The sequence spans 280 residues: Pantothenate synthetase (280 aa).

30-37 (MGYLHEGH) contributes to the ATP binding site. H37 acts as the Proton donor in catalysis. Q61 provides a ligand contact to (R)-pantoate. Residue Q61 participates in beta-alanine binding. 147 to 150 (GQKD) contributes to the ATP binding site. Q153 contributes to the (R)-pantoate binding site. ATP-binding positions include V176 and 184 to 187 (MSSR).

This sequence belongs to the pantothenate synthetase family. Homodimer.

It is found in the cytoplasm. The catalysed reaction is (R)-pantoate + beta-alanine + ATP = (R)-pantothenate + AMP + diphosphate + H(+). Its pathway is cofactor biosynthesis; (R)-pantothenate biosynthesis; (R)-pantothenate from (R)-pantoate and beta-alanine: step 1/1. Its function is as follows. Catalyzes the condensation of pantoate with beta-alanine in an ATP-dependent reaction via a pantoyl-adenylate intermediate. The polypeptide is Pantothenate synthetase (Fervidobacterium nodosum (strain ATCC 35602 / DSM 5306 / Rt17-B1)).